A 152-amino-acid polypeptide reads, in one-letter code: Flagellar assembly factor FliW (152 aa).

Belongs to the FliW family. As to quaternary structure, interacts with translational regulator CsrA and flagellin(s).

Its subcellular location is the cytoplasm. Its function is as follows. Acts as an anti-CsrA protein, binds CsrA and prevents it from repressing translation of its target genes, one of which is flagellin. Binds to flagellin and participates in the assembly of the flagellum. The chain is Flagellar assembly factor FliW from Desulfitobacterium hafniense (strain Y51).